The sequence spans 219 residues: Ribose-5-phosphate isomerase A (219 aa).

Substrate is bound by residues 28–31 (SGST), 81–84 (DGAD), and 94–97 (KGGG). Glu-103 functions as the Proton acceptor in the catalytic mechanism. Lys-121 is a substrate binding site.

It belongs to the ribose 5-phosphate isomerase family. As to quaternary structure, homodimer.

The enzyme catalyses aldehydo-D-ribose 5-phosphate = D-ribulose 5-phosphate. It participates in carbohydrate degradation; pentose phosphate pathway; D-ribose 5-phosphate from D-ribulose 5-phosphate (non-oxidative stage): step 1/1. In terms of biological role, catalyzes the reversible conversion of ribose-5-phosphate to ribulose 5-phosphate. The sequence is that of Ribose-5-phosphate isomerase A from Pasteurella multocida (strain Pm70).